A 235-amino-acid polypeptide reads, in one-letter code: Derlin-3 (235 aa).

The Cytoplasmic portion of the chain corresponds to 1–22 (MAWQGLAAEFLQVPAVTRAYTA). Residues 23 to 43 (ACVLTTAAVQLELLSPFQLYF) form a helical membrane-spanning segment. The Lumenal portion of the chain corresponds to 44–58 (NPHLVFRKFQVWRLV). The chain crosses the membrane as a helical span at residues 59–79 (TNFLFFGPLGFSFFFNMLFVF). The Cytoplasmic segment spans residues 80–98 (RYCRMLEEGSFRGRTADFV). A helical membrane pass occupies residues 99–119 (FMFLFGGVLMTLLGLLGSLFF). Residues 120–157 (LGQALMAMLVYVWSRRSPRVRVNFFGLLTFQAPFLPWA) are Lumenal-facing. A helical membrane pass occupies residues 158-178 (LMGFSLLLGNSILVDLLGIAV). Residues 179 to 235 (GHIYYFLEDVFPNQPGGKRLLQTPGFLKLLLDAPAEDPNYLPLPEEQPGPHLPPPQQ) lie on the Cytoplasmic side of the membrane. Positions 216–235 (PNYLPLPEEQPGPHLPPPQQ) are disordered. A compositionally biased stretch (pro residues) spans 223–235 (EEQPGPHLPPPQQ).

The protein belongs to the derlin family. As to quaternary structure, forms homo- and heterooligomers with DERL2 and, to a lesser extent, with DERL1. Interacts with VCP and EDEM1. Interacts with SELENOK and SELENOS. Interacts with the signal recognition particle/SRP and the SRP receptor; in the process of endoplasmic reticulum stress-induced pre-emptive quality control. As to expression, unlike DERL1 and DERL2, restricted to several tissues. Expressed at high levels in placenta, pancreas, spleen and small intestine.

The protein resides in the endoplasmic reticulum membrane. Functional component of endoplasmic reticulum-associated degradation (ERAD) for misfolded lumenal glycoproteins, but not that of misfolded nonglycoproteins. May act by forming a channel that allows the retrotranslocation of misfolded glycoproteins into the cytosol where they are ubiquitinated and degraded by the proteasome. May mediate the interaction between VCP and the misfolded glycoproteins. May be involved in endoplasmic reticulum stress-induced pre-emptive quality control, a mechanism that selectively attenuates the translocation of newly synthesized proteins into the endoplasmic reticulum and reroutes them to the cytosol for proteasomal degradation. This Homo sapiens (Human) protein is Derlin-3.